A 393-amino-acid polypeptide reads, in one-letter code: Elongation factor Tu (393 aa).

The region spanning 6–204 (KPHINVGTIG…ALEKIELPVR (199 aa)) is the tr-type G domain. The interval 15–22 (GHVDHGKT) is G1. 15 to 22 (GHVDHGKT) contributes to the GTP binding site. Thr-22 provides a ligand contact to Mg(2+). Residues 58–62 (GITIS) form a G2 region. The interval 79-82 (DCPG) is G3. Residues 79 to 83 (DCPGH) and 134 to 137 (NKCD) contribute to the GTP site. The G4 stretch occupies residues 134-137 (NKCD). The interval 172-174 (SAV) is G5.

This sequence belongs to the TRAFAC class translation factor GTPase superfamily. Classic translation factor GTPase family. EF-Tu/EF-1A subfamily. In terms of assembly, monomer.

The protein localises to the cytoplasm. It catalyses the reaction GTP + H2O = GDP + phosphate + H(+). GTP hydrolase that promotes the GTP-dependent binding of aminoacyl-tRNA to the A-site of ribosomes during protein biosynthesis. In Anaplasma marginale (strain St. Maries), this protein is Elongation factor Tu.